The primary structure comprises 715 residues: 1,4-alpha-glucan branching enzyme GlgB (715 aa).

The active-site Nucleophile is the D399. E452 functions as the Proton donor in the catalytic mechanism.

Belongs to the glycosyl hydrolase 13 family. GlgB subfamily. As to quaternary structure, monomer.

It carries out the reaction Transfers a segment of a (1-&gt;4)-alpha-D-glucan chain to a primary hydroxy group in a similar glucan chain.. The protein operates within glycan biosynthesis; glycogen biosynthesis. Catalyzes the formation of the alpha-1,6-glucosidic linkages in glycogen by scission of a 1,4-alpha-linked oligosaccharide from growing alpha-1,4-glucan chains and the subsequent attachment of the oligosaccharide to the alpha-1,6 position. This chain is 1,4-alpha-glucan branching enzyme GlgB, found in Rhodopseudomonas palustris (strain BisA53).